The primary structure comprises 254 residues: Probable electron transfer flavoprotein subunit beta (254 aa).

This sequence belongs to the ETF beta-subunit/FixA family. As to quaternary structure, heterodimer of an alpha and a beta subunit. FAD serves as cofactor. The cofactor is AMP.

Its subcellular location is the mitochondrion matrix. The electron transfer flavoprotein serves as a specific electron acceptor for several dehydrogenases, including five acyl-CoA dehydrogenases, glutaryl-CoA and sarcosine dehydrogenase. It transfers the electrons to the main mitochondrial respiratory chain via ETF-ubiquinone oxidoreductase (ETF dehydrogenase). The chain is Probable electron transfer flavoprotein subunit beta from Schizosaccharomyces pombe (strain 972 / ATCC 24843) (Fission yeast).